The primary structure comprises 95 residues: YcgL domain-containing protein Sden_1630 (95 aa).

The region spanning 1 to 85 (MICTVYKSRR…PKANLLEEHK (85 aa)) is the YcgL domain.

This chain is YcgL domain-containing protein Sden_1630, found in Shewanella denitrificans (strain OS217 / ATCC BAA-1090 / DSM 15013).